Here is a 957-residue protein sequence, read N- to C-terminus: MYGSARTISNPEGSPSRSPRLPRSPRLGHRRTSSGGGGGTGKTLSMENIQSLNAAYATSGPMYLSDHEGVASTTYPKGTMTLGRATNRAVYGGRVTAMGSSPNIASAGLSHTDVLSYTDQHGGLGGSSHHHHHQVPSMLRQVRDSTMLDLQAQLKELQRENDLLRKELDIKDSKLGSSMNSIKTFWSPELKKERVLRKEEAARMSVLKEQMRVSHEENQHLQLTIQALQDELRTQRDLNHLLQQESGNRGAEHFTIELTEENFRRLQAEHDRQAKELFLLRKTLEEMELRIETQKQTLNARDESIKKLLEMLQSKGLPSKSLEDDNERTRRMAEAESQVSHLEVILDQKEKENIHLREELHRRSQLQPEPAKTKALQTVIEMKDTKIASLERNIRDLEDEIQMLKANGVLNTEDREEEIKQIEVYKSHSKFMKTKNDQLKQELSKKESELLALQTKLETLSNQNSDCKQHIEVLKESLTAKEQRAAILQTEVDALRLRLEEKESFLNKKTKQLQDLTEEKGTLAGEIRDMKDMLEVKERKINVLQKKIENLQEQLRDKDKQLTNLKDRVKSLQTDSSNTDTALATLEEALSEKERIIERLKEQRERDDRERLEEIESFRKENKDLKEKVNALQAELTEKESSLIDLKEHASSLASAGLKRDSKLKSLEIAIEQKKEECNKLEAQLKKAHNIEDDSRMNPEFADRLKQLDKEASYYRDECGKAQAEVDRLLEILKEVENEKNDKDKKIAELESLTLRHMKDQNKKVANLKHNQQLEKKKNAQLLEEVRRREFSMVDNSQHLQIEELMNALEKTRQELDATKARLASTQQSLAEKEAHLANLRMERRKQLEEILEMKQEALLAAISEKDANIALLELSASKKKKTQEEVMALKREKDRLVHQLKQQTQNRMKLMADNYDDDHHHYHHHHHHHHHRSPGRSQHSNHRPSPDQDDEEGIWA.

The segment covering 1–13 (MYGSARTISNPEG) has biased composition (polar residues). Positions 1 to 44 (MYGSARTISNPEGSPSRSPRLPRSPRLGHRRTSSGGGGGTGKTL) are disordered. Residues 14 to 25 (SPSRSPRLPRSP) are compositionally biased toward low complexity. A phosphoserine mark is found at Ser-65 and Ser-666. Residues 140–917 (RQVRDSTMLD…RMKLMADNYD (778 aa)) are a coiled coil. The involved in binding to RIMS1 stretch occupies residues 760-957 (DQNKKVANLK…DQDDEEGIWA (198 aa)). Residues 918–957 (DDHHHYHHHHHHHHHRSPGRSQHSNHRPSPDQDDEEGIWA) are disordered. Positions 922-943 (HYHHHHHHHHHRSPGRSQHSNH) are enriched in basic residues. The segment covering 948–957 (DQDDEEGIWA) has biased composition (acidic residues).

Interacts with BSN, ERC1, PPFIA1, PPFIA2, PPFIA3 and PPFIA4. Interacts through its C-terminus with the PDZ domain of RIMS1. Part of a complex consisting of ERC2, RIMS1 and UNC13A. In terms of tissue distribution, predominantly expressed in brain, including hippocampus, cortex, cerebellum, amygdala and olfactory bulb.

It is found in the cytoplasm. The protein resides in the synapse. Its subcellular location is the presynaptic active zone. The protein localises to the cytoskeleton. In terms of biological role, thought to be involved in the organization of the cytomatrix at the nerve terminals active zone (CAZ) which regulates neurotransmitter release. Seems to act together with BSN. May recruit liprin-alpha proteins to the CAZ. The sequence is that of ERC protein 2 (Erc2) from Rattus norvegicus (Rat).